Here is a 591-residue protein sequence, read N- to C-terminus: 2-succinyl-5-enolpyruvyl-6-hydroxy-3-cyclohexene-1-carboxylate synthase (591 aa).

Belongs to the TPP enzyme family. MenD subfamily. As to quaternary structure, homodimer. Mg(2+) serves as cofactor. The cofactor is Mn(2+). Requires thiamine diphosphate as cofactor.

It carries out the reaction isochorismate + 2-oxoglutarate + H(+) = 5-enolpyruvoyl-6-hydroxy-2-succinyl-cyclohex-3-ene-1-carboxylate + CO2. It participates in quinol/quinone metabolism; 1,4-dihydroxy-2-naphthoate biosynthesis; 1,4-dihydroxy-2-naphthoate from chorismate: step 2/7. It functions in the pathway cofactor biosynthesis; phylloquinone biosynthesis. Its function is as follows. Catalyzes the thiamine diphosphate-dependent decarboxylation of 2-oxoglutarate and the subsequent addition of the resulting succinic semialdehyde-thiamine pyrophosphate anion to isochorismate to yield 2-succinyl-5-enolpyruvyl-6-hydroxy-3-cyclohexene-1-carboxylate (SEPHCHC). The chain is 2-succinyl-5-enolpyruvyl-6-hydroxy-3-cyclohexene-1-carboxylate synthase from Rippkaea orientalis (strain PCC 8801 / RF-1) (Cyanothece sp. (strain PCC 8801)).